A 90-amino-acid polypeptide reads, in one-letter code: DNA-binding protein HRm (90 aa).

The protein belongs to the bacterial histone-like protein family.

Functionally, histone-like DNA-binding protein which is capable of wrapping DNA to stabilize it, and thus to prevent its denaturation under extreme environmental conditions. The protein is DNA-binding protein HRm (hupB) of Rhizobium meliloti (strain 1021) (Ensifer meliloti).